Here is a 304-residue protein sequence, read N- to C-terminus: Probable UDP-3-O-acylglucosamine N-acyltransferase 2, mitochondrial (304 aa).

The transit peptide at 1–47 (MAATLWRLYSKSICNSLQGIILNKPFIQKQLLLSSRTRSLSFSSDSQ) directs the protein to the mitochondrion. Residue 159 to 161 (FGF) participates in UDP-N-acetyl-alpha-D-glucosamine binding. The hexadecanoate site is built by D209 and Q213. The active-site Proton acceptor is H216. The UDP-N-acetyl-alpha-D-glucosamine site is built by N217, S235, and H253.

It belongs to the transferase hexapeptide repeat family. LpxD subfamily. Homotrimer.

It localises to the mitochondrion. It catalyses the reaction a UDP-3-O-[(3R)-3-hydroxyacyl]-alpha-D-glucosamine + a (3R)-hydroxyacyl-[ACP] = a UDP-2-N,3-O-bis[(3R)-3-hydroxyacyl]-alpha-D-glucosamine + holo-[ACP] + H(+). It functions in the pathway glycolipid biosynthesis; lipid IV(A) biosynthesis; lipid IV(A) from (3R)-3-hydroxytetradecanoyl-[acyl-carrier-protein] and UDP-N-acetyl-alpha-D-glucosamine: step 3/6. Its function is as follows. Involved in the biosynthesis of lipid A, a phosphorylated glycolipid that in bacteria anchors the lipopolysaccharide to the outer membrane of the cell. Lipid A-like molecules in plants may serve as structural components of the outer membranes of mitochondria and/or chloroplasts, or may be involved in signal transduction or plant defense responses. In Arabidopsis thaliana (Mouse-ear cress), this protein is Probable UDP-3-O-acylglucosamine N-acyltransferase 2, mitochondrial (LPXD2).